The chain runs to 496 residues: MKFSLAISFFILMSLLFEDACAKEKSSKKGKGKKKQYLCPSQQSPEDLARVPPNSTSNILNRLLVSYDPRIRPNFKGIPVDVVVNIFINSFGSIQETTMDYRVNIFLRQKWNDPRLKLPSDFRGSDALTVDPTMYKCLWKPDLFFANEKSANFHDVTQENILLFIFRDGDVLVSMRLSITLSCPLDLTLFPMDTQRCKMQLESFGYTTDDLRFIWQSGDPVQLEKIALPQFDIKKEDIEYGNCTKYYKGTGYYTCVEVIFTLRRQVGFYMMGVYAPTLLIVVLSWLSFWINPDASAARVPLGIFSVLSLASECTTLAAELPKVSYVKALDVWLIACLLFGFASLVEYAVVQVMLNNPKRVEAEKARIAKAEQADGKGGNAAKKNTVNGTGTPVHISTLQVGETRCKKVCTSKSDLRSNDFSIVGSLPRDFELSNYDCYGKPIEVNNGLGKPQAKNKKPPPAKPVIPTAAKRIDLYARALFPFCFLFFNVIYWSIYL.

An N-terminal signal peptide occupies residues 1 to 22 (MKFSLAISFFILMSLLFEDACA). At 23–268 (KEKSSKKGKG…IFTLRRQVGF (246 aa)) the chain is on the extracellular side. The interval 32–53 (GKKKQYLCPSQQSPEDLARVPP) is disordered. Residue N54 is glycosylated (N-linked (GlcNAc...) asparagine). Residues R108 and S174 each contribute to the glycine site. A disulfide bridge links C183 with C197. Residue N242 is glycosylated (N-linked (GlcNAc...) asparagine). C243 and C255 are oxidised to a cystine. T250 serves as a coordination point for glycine. A helical membrane pass occupies residues 269-289 (YMMGVYAPTLLIVVLSWLSFW). Residues 290–294 (INPDA) are Cytoplasmic-facing. Residues 295–315 (SAARVPLGIFSVLSLASECTT) form a helical membrane-spanning segment. At 316–327 (LAAELPKVSYVK) the chain is on the extracellular side. The helical transmembrane segment at 328-349 (ALDVWLIACLLFGFASLVEYAV) threads the bilayer. The Cytoplasmic portion of the chain corresponds to 350–471 (VQVMLNNPKR…KPVIPTAAKR (122 aa)). A Phosphothreonine modification is found at T391. Residues 472–495 (IDLYARALFPFCFLFFNVIYWSIY) form a helical membrane-spanning segment. Position 496 (L496) is a topological domain, extracellular.

It belongs to the ligand-gated ion channel (TC 1.A.9) family. Glycine receptor (TC 1.A.9.3) subfamily. GLRB sub-subfamily. Forms heteropentamers with glycin receptor alpha subunits. Heteropentamers with GLRA1 can be composed of two GLRA1 and three GLRB subunits, or three GLRA1 and two GLRB subunits, or four GLRA1 subunits and one GLRB subunit. Forms heteropentamers with GLRA2. Functional GLRB-GLRA2 heteropentamers contain four GLRA2 subunits and one GLRB subunit, although alternative subunit composition cannot be excluded. Forms a heteropentamer with GLRA3. Interacts with GPHN. As to expression, detected in spinal cord, brain and brain stem, especially in the periolivary region, spinal nuclei, trigeminal nucleus, medulla oblongata, pons and midbrain. Detected in the inner plexiform layer of the retina (at protein level). High levels of expression in cortex, hippocampus, thalamus and cerebellum. Detected in spinal cord.

It is found in the postsynaptic cell membrane. The protein resides in the synapse. It localises to the cell projection. The protein localises to the dendrite. Its subcellular location is the cell membrane. It is found in the cytoplasm. It carries out the reaction chloride(in) = chloride(out). Its activity is regulated as follows. Channel opening is triggered by extracellular glycine. Heteropentameric channels composed of GLRB and GLRA1 are activated by lower glycine levels than homopentameric GLRA1. In terms of biological role, subunit of heteromeric glycine-gated chloride channels. Plays an important role in the down-regulation of neuronal excitability. Contributes to the generation of inhibitory postsynaptic currents. The polypeptide is Glycine receptor subunit beta (Glrb) (Mus musculus (Mouse)).